The sequence spans 372 residues: 4-hydroxy-3-methylbut-2-en-1-yl diphosphate synthase (flavodoxin) (372 aa).

[4Fe-4S] cluster-binding residues include Cys-270, Cys-273, Cys-305, and Glu-312.

Belongs to the IspG family. It depends on [4Fe-4S] cluster as a cofactor.

The enzyme catalyses (2E)-4-hydroxy-3-methylbut-2-enyl diphosphate + oxidized [flavodoxin] + H2O + 2 H(+) = 2-C-methyl-D-erythritol 2,4-cyclic diphosphate + reduced [flavodoxin]. It functions in the pathway isoprenoid biosynthesis; isopentenyl diphosphate biosynthesis via DXP pathway; isopentenyl diphosphate from 1-deoxy-D-xylulose 5-phosphate: step 5/6. In terms of biological role, converts 2C-methyl-D-erythritol 2,4-cyclodiphosphate (ME-2,4cPP) into 1-hydroxy-2-methyl-2-(E)-butenyl 4-diphosphate. In Salmonella schwarzengrund (strain CVM19633), this protein is 4-hydroxy-3-methylbut-2-en-1-yl diphosphate synthase (flavodoxin).